Consider the following 272-residue polypeptide: Shikimate dehydrogenase (NADP(+)) (272 aa).

Residues 14-16 and Thr-61 contribute to the shikimate site; that span reads SKS. The Proton acceptor role is filled by Lys-65. NADP(+) is bound at residue Glu-77. Shikimate-binding residues include Asn-86 and Asp-102. NADP(+) is bound by residues 126-130, 149-154, and Met-212; these read GAGGA and NRTADK. A shikimate-binding site is contributed by Tyr-214. Gly-237 contacts NADP(+).

Belongs to the shikimate dehydrogenase family. As to quaternary structure, homodimer.

It carries out the reaction shikimate + NADP(+) = 3-dehydroshikimate + NADPH + H(+). Its pathway is metabolic intermediate biosynthesis; chorismate biosynthesis; chorismate from D-erythrose 4-phosphate and phosphoenolpyruvate: step 4/7. Functionally, involved in the biosynthesis of the chorismate, which leads to the biosynthesis of aromatic amino acids. Catalyzes the reversible NADPH linked reduction of 3-dehydroshikimate (DHSA) to yield shikimate (SA). The sequence is that of Shikimate dehydrogenase (NADP(+)) from Glaesserella parasuis serovar 5 (strain SH0165) (Haemophilus parasuis).